The primary structure comprises 588 residues: Aspartate--tRNA ligase (588 aa).

Glu174 contacts L-aspartate. The segment at 198–201 is aspartate; sequence QLFK. An L-aspartate-binding site is contributed by Arg220. Residues 220–222 and Gln229 each bind ATP; that span reads RDE. His448 lines the L-aspartate pocket. Glu482 is an ATP binding site. Arg489 contributes to the L-aspartate binding site. 534-537 contacts ATP; sequence GIDR.

It belongs to the class-II aminoacyl-tRNA synthetase family. Type 1 subfamily. As to quaternary structure, homodimer.

Its subcellular location is the cytoplasm. It catalyses the reaction tRNA(Asp) + L-aspartate + ATP = L-aspartyl-tRNA(Asp) + AMP + diphosphate. In terms of biological role, catalyzes the attachment of L-aspartate to tRNA(Asp) in a two-step reaction: L-aspartate is first activated by ATP to form Asp-AMP and then transferred to the acceptor end of tRNA(Asp). In Xanthomonas oryzae pv. oryzae (strain MAFF 311018), this protein is Aspartate--tRNA ligase.